The following is a 79-amino-acid chain: Cell division protein ZapB (79 aa).

Positions glutamate 4 to glutamate 78 form a coiled coil.

It belongs to the ZapB family. Homodimer. The ends of the coiled-coil dimer bind to each other, forming polymers. Interacts with FtsZ.

It is found in the cytoplasm. Its function is as follows. Non-essential, abundant cell division factor that is required for proper Z-ring formation. It is recruited early to the divisome by direct interaction with FtsZ, stimulating Z-ring assembly and thereby promoting cell division earlier in the cell cycle. Its recruitment to the Z-ring requires functional FtsA or ZipA. The polypeptide is Cell division protein ZapB (Pectobacterium carotovorum subsp. carotovorum (strain PC1)).